Consider the following 145-residue polypeptide: Large ribosomal subunit protein bL19 (145 aa).

Over residues 112–130 (GKSARIKERRPAKAVEKTS) the composition is skewed to basic and acidic residues. Residues 112–145 (GKSARIKERRPAKAVEKTSKPASAKKPAAKANKK) form a disordered region.

Belongs to the bacterial ribosomal protein bL19 family.

Its function is as follows. This protein is located at the 30S-50S ribosomal subunit interface and may play a role in the structure and function of the aminoacyl-tRNA binding site. The polypeptide is Large ribosomal subunit protein bL19 (Malacoplasma penetrans (strain HF-2) (Mycoplasma penetrans)).